The following is a 722-amino-acid chain: Tegument protein UL46 (722 aa).

Residues 423–534 (RLAASGPPGG…AAAARPLAAQ (112 aa)) form a disordered region. Basic and acidic residues-rich tracts occupy residues 440–451 (CRDKIQRTRRDN) and 474–491 (HRED…DRGP). Positions 510–522 (PRLPPRNPAPPEQ) are enriched in pro residues. Low complexity predominate over residues 523–534 (RPAAAARPLAAQ).

The protein belongs to the herpesviridae HHV-1 VP11/12 protein family. Interacts with VP16. Interacts with host LCK, PIK3R1, SHC1 AND GRB2; these interactions promote the activation of the PI3K/AKT pathway. Interacts with host YWHAB. Interacts with ICP0; this interaction targets UL46 for degradation by the proteasome. Post-translationally, phosphorylated by host LCK. The phosphorylation seems to be lymphocyte-specific.

The protein resides in the virion tegument. It localises to the host cell membrane. Plays a role in the activation of the host PI3K/AKT pathway to promote cell survival. Interacts with and activates host LCK and thereby recruits downstream partners SHC1, GRB2 and PI3KR1 in order to activate the PI3K pathway by phosphorylating host AKT on its activating residues. This mechanism is inhibited by the viral protein US3 that instead promotes incorporation of UL46 into virions. This chain is Tegument protein UL46, found in Homo sapiens (Human).